The sequence spans 147 residues: Deoxyuridine 5'-triphosphate nucleotidohydrolase (147 aa).

Substrate contacts are provided by residues 63 to 65 (RSG), Asn-76, and 80 to 82 (TID).

This sequence belongs to the dUTPase family. The cofactor is Mg(2+).

It catalyses the reaction dUTP + H2O = dUMP + diphosphate + H(+). The protein operates within pyrimidine metabolism; dUMP biosynthesis; dUMP from dCTP (dUTP route): step 2/2. Its function is as follows. This enzyme is involved in nucleotide metabolism: it produces dUMP, the immediate precursor of thymidine nucleotides and it decreases the intracellular concentration of dUTP so that uracil cannot be incorporated into DNA. This is Deoxyuridine 5'-triphosphate nucleotidohydrolase from Chlamydia caviae (strain ATCC VR-813 / DSM 19441 / 03DC25 / GPIC) (Chlamydophila caviae).